The sequence spans 324 residues: Glyoxylate/hydroxypyruvate reductase B (324 aa).

Catalysis depends on residues arginine 237 and glutamate 266. Histidine 285 (proton donor) is an active-site residue.

It belongs to the D-isomer specific 2-hydroxyacid dehydrogenase family. GhrB subfamily. Homodimer.

It is found in the cytoplasm. It catalyses the reaction glycolate + NADP(+) = glyoxylate + NADPH + H(+). The enzyme catalyses (R)-glycerate + NAD(+) = 3-hydroxypyruvate + NADH + H(+). It carries out the reaction (R)-glycerate + NADP(+) = 3-hydroxypyruvate + NADPH + H(+). Catalyzes the NADPH-dependent reduction of glyoxylate and hydroxypyruvate into glycolate and glycerate, respectively. The chain is Glyoxylate/hydroxypyruvate reductase B from Shigella boydii serotype 18 (strain CDC 3083-94 / BS512).